The sequence spans 314 residues: UDP-N-acetylenolpyruvoylglucosamine reductase (314 aa).

Residues 31–208 form the FAD-binding PCMH-type domain; it reads RIGGPADYYA…LSARFRLTPK (178 aa). Residue R187 is part of the active site. The active-site Proton donor is the S237. The active site involves E307.

The protein belongs to the MurB family. The cofactor is FAD.

The protein resides in the cytoplasm. It carries out the reaction UDP-N-acetyl-alpha-D-muramate + NADP(+) = UDP-N-acetyl-3-O-(1-carboxyvinyl)-alpha-D-glucosamine + NADPH + H(+). It participates in cell wall biogenesis; peptidoglycan biosynthesis. Cell wall formation. The protein is UDP-N-acetylenolpyruvoylglucosamine reductase of Agathobacter rectalis (strain ATCC 33656 / DSM 3377 / JCM 17463 / KCTC 5835 / VPI 0990) (Eubacterium rectale).